The chain runs to 118 residues: Protein TusC (118 aa).

This sequence belongs to the DsrF/TusC family. In terms of assembly, heterohexamer, formed by a dimer of trimers. The hexameric TusBCD complex contains 2 copies each of TusB, TusC and TusD. The TusBCD complex interacts with TusE.

The protein localises to the cytoplasm. In terms of biological role, part of a sulfur-relay system required for 2-thiolation of 5-methylaminomethyl-2-thiouridine (mnm(5)s(2)U) at tRNA wobble positions. This Salmonella paratyphi C (strain RKS4594) protein is Protein TusC.